The chain runs to 79 residues: Large ribosomal subunit protein uL29 (79 aa).

This sequence belongs to the universal ribosomal protein uL29 family.

The sequence is that of Large ribosomal subunit protein uL29 from Nocardia farcinica (strain IFM 10152).